A 234-amino-acid chain; its full sequence is Demethylmenaquinone methyltransferase (234 aa).

Residues threonine 58, aspartate 79, and 106–107 (NA) contribute to the S-adenosyl-L-methionine site.

It belongs to the class I-like SAM-binding methyltransferase superfamily. MenG/UbiE family.

It carries out the reaction a 2-demethylmenaquinol + S-adenosyl-L-methionine = a menaquinol + S-adenosyl-L-homocysteine + H(+). It participates in quinol/quinone metabolism; menaquinone biosynthesis; menaquinol from 1,4-dihydroxy-2-naphthoate: step 2/2. Methyltransferase required for the conversion of demethylmenaquinol (DMKH2) to menaquinol (MKH2). In Geobacillus kaustophilus (strain HTA426), this protein is Demethylmenaquinone methyltransferase.